Reading from the N-terminus, the 268-residue chain is Imidazole glycerol phosphate synthase subunit HisF (268 aa).

Residues Asp-12 and Asp-131 contribute to the active site.

Belongs to the HisA/HisF family. As to quaternary structure, heterodimer of HisH and HisF.

It localises to the cytoplasm. The enzyme catalyses 5-[(5-phospho-1-deoxy-D-ribulos-1-ylimino)methylamino]-1-(5-phospho-beta-D-ribosyl)imidazole-4-carboxamide + L-glutamine = D-erythro-1-(imidazol-4-yl)glycerol 3-phosphate + 5-amino-1-(5-phospho-beta-D-ribosyl)imidazole-4-carboxamide + L-glutamate + H(+). Its pathway is amino-acid biosynthesis; L-histidine biosynthesis; L-histidine from 5-phospho-alpha-D-ribose 1-diphosphate: step 5/9. Its function is as follows. IGPS catalyzes the conversion of PRFAR and glutamine to IGP, AICAR and glutamate. The HisF subunit catalyzes the cyclization activity that produces IGP and AICAR from PRFAR using the ammonia provided by the HisH subunit. The chain is Imidazole glycerol phosphate synthase subunit HisF from Salinibacter ruber (strain DSM 13855 / M31).